Here is a 304-residue protein sequence, read N- to C-terminus: Glutaminase (304 aa).

Residues S63, N114, E158, N165, Y189, Y240, and V258 each contribute to the substrate site.

It belongs to the glutaminase family. As to quaternary structure, homotetramer.

It carries out the reaction L-glutamine + H2O = L-glutamate + NH4(+). The chain is Glutaminase from Shewanella baltica (strain OS185).